The sequence spans 593 residues: Histone-arginine methyltransferase CARMER (593 aa).

Residues 122 to 429 form the SAM-dependent MTase PRMT-type domain; it reads ASQYFQFYGY…QRQSYDVEMD (308 aa). S-adenosyl-L-methionine is bound by residues Q135, R144, G168, E190, E219, and T247. R482 is modified (asymmetric dimethylarginine; by autocatalysis). Residues 521-540 form a disordered region; sequence LISSTGRQQSQQQTTPAQPL. Residues 523–535 show a composition bias toward low complexity; it reads SSTGRQQSQQQTT.

Belongs to the class I-like SAM-binding methyltransferase superfamily. Protein arginine N-methyltransferase family. As to quaternary structure, homodimer. Post-translationally, the dimethylated protein is the major form.

It localises to the cytoplasm. Its subcellular location is the nucleus. It carries out the reaction L-arginyl-[protein] + 2 S-adenosyl-L-methionine = N(omega),N(omega)-dimethyl-L-arginyl-[protein] + 2 S-adenosyl-L-homocysteine + 2 H(+). Its function is as follows. Methylates (mono- and asymmetric dimethylation) the guanidino nitrogens of arginyl residues in proteins. May methylate histone H3 at 'Arg-17' and activate transcription via chromatin remodeling. The protein is Histone-arginine methyltransferase CARMER of Aedes aegypti (Yellowfever mosquito).